The sequence spans 358 residues: Mannonate dehydratase (358 aa).

It belongs to the mannonate dehydratase family. Fe(2+) serves as cofactor. It depends on Mn(2+) as a cofactor.

The catalysed reaction is D-mannonate = 2-dehydro-3-deoxy-D-gluconate + H2O. It functions in the pathway carbohydrate metabolism; pentose and glucuronate interconversion. Functionally, catalyzes the dehydration of D-mannonate. In Lactococcus lactis subsp. cremoris (strain MG1363), this protein is Mannonate dehydratase.